The primary structure comprises 568 residues: Oxygen-dependent choline dehydrogenase (568 aa).

8–37 contributes to the FAD binding site; that stretch reads DYIIIGAGSAGNTLAARLTEDAGVTVLLLE. Catalysis depends on His-477, which acts as the Proton acceptor.

This sequence belongs to the GMC oxidoreductase family. FAD serves as cofactor.

The catalysed reaction is choline + A = betaine aldehyde + AH2. It catalyses the reaction betaine aldehyde + NAD(+) + H2O = glycine betaine + NADH + 2 H(+). Its pathway is amine and polyamine biosynthesis; betaine biosynthesis via choline pathway; betaine aldehyde from choline (cytochrome c reductase route): step 1/1. Involved in the biosynthesis of the osmoprotectant glycine betaine. Catalyzes the oxidation of choline to betaine aldehyde and betaine aldehyde to glycine betaine at the same rate. This chain is Oxygen-dependent choline dehydrogenase, found in Pseudomonas syringae pv. tomato (strain ATCC BAA-871 / DC3000).